Reading from the N-terminus, the 46-residue chain is Protein PsbN (46 aa).

The helical transmembrane segment at 10–30 (LIITILAVTIAFTAVSLYTAF) threads the bilayer.

The protein belongs to the PsbN family.

It localises to the cellular thylakoid membrane. Its function is as follows. May play a role in photosystem I and II biogenesis. This Acaryochloris marina (strain MBIC 11017) protein is Protein PsbN.